Here is a 661-residue protein sequence, read N- to C-terminus: MSGNETPDAGTVKSVSPSSGGSSLPARPTLRERDPNDIENRLRDQIEEDPTQILLYIELIKYYVGKQQVAEIREVFGQLHELFPLESFLWTIHLNWELEQEESGQVETLLAKCLSGELMNNDIYLWSTYLGYVRRKNNTVTGGEEARGTVLKAYELVMEKCAVFEPRSMQFWQDYLQFLEQWKPVSKWEEQSRVEILRKLYKRLLCLPVESLERYWEKYTQWEQEVNQLTARKFIGELSASYMNARSLYQEWSNLTKGLRRSLPTKLNQATQQNLPAPGQYDEYQLQIWTKWIQWELDNKLDLPEVVLRQRVEYVHRQAVQHMCFAPEIWYNYAMFVDENEHEKVLEIAVRCNPGSLSLTFKLAEYLELNNKIEALEERFQHCIARISMELQVMNDTTMDPDKILRQTRKLTFAYCVYMTTMKRVTGLSAARKVFSKCRKLKKDISYEIYVENAYMEYYNNSDVTTPCRVLEFGLKYFQDNGNYINKYLDFLILVKQDAQIKSLFESCIDKIYNLDQLKEIYKKVINYESKFGNLNNVYELERRFFEKFPEAEKIEVFTDRYQLQGENLLKRLEFPYLMDEYGIPVLSGYAVKRSLHSAGIVFDDNGSSKRQRQEQTEAVPMEIIELLKVLPKRQYFKTIVLDPHKLADFLSDKVTIPPCD.

The disordered stretch occupies residues 1–37; the sequence is MSGNETPDAGTVKSVSPSSGGSSLPARPTLRERDPND. Positions 14 to 23 are enriched in low complexity; that stretch reads SVSPSSGGSS. HAT repeat units follow at residues 67 to 99, 101 to 135, 149 to 181, 192 to 225, 262 to 298, 307 to 339, and 513 to 548; these read QQVA…WELE, EESG…YVRR, TVLK…FLEQ, SRVE…WEQE, SLPT…WELD, VLRQ…FVDE, and YNLD…FFEK.

It localises to the nucleus. It is found in the cytoplasm. Its function is as follows. Component of the cleavage factor IA (CFIA) complex, which is involved in the endonucleolytic cleavage during polyadenylation-dependent pre-mRNA 3'-end formation. This Eremothecium gossypii (strain ATCC 10895 / CBS 109.51 / FGSC 9923 / NRRL Y-1056) (Yeast) protein is mRNA 3'-end-processing protein RNA14 (RNA14).